The chain runs to 409 residues: MSESEIPGQVVVDLEADQSAEGGRRMVLNMGPQHPSTHGVLRLLMELDGENIMKCVPDIGFLHTGIEKEFEEKFYQQAVTLTDRVDYLAPLSNNLGWCLAVEKLLQLEIPPQAQWMRVMLTELTRLNSHLVWLGTHALDIGAMSVFLYCFREREEILKIFELFSGQRMMTSYFRIGGLALEPPRGWQQRVKKFLDVFPSRIDEYENLLTNNRIWTGRTKGIGFISLEDMLDLGITGPMLRAAGLKIDARKDAPYSSYEKFDFEVPTSTDNDVFARYQVRVEEMRQSTKIVRQAMEGMPAGAWKADAPHVVLPDREKMKTQMEALIFHFKIVTEGFRVPEGEVYQVIESPRGELGYYVVSDGTTKPYRVHMRTPSFGNLQAVPKMVEGSLIADVIASIGSMDFVLGDTDR.

Belongs to the complex I 49 kDa subunit family. In terms of assembly, NDH-1 is composed of 14 different subunits. Subunits NuoB, C, D, E, F, and G constitute the peripheral sector of the complex.

The protein localises to the cell inner membrane. It carries out the reaction a quinone + NADH + 5 H(+)(in) = a quinol + NAD(+) + 4 H(+)(out). In terms of biological role, NDH-1 shuttles electrons from NADH, via FMN and iron-sulfur (Fe-S) centers, to quinones in the respiratory chain. The immediate electron acceptor for the enzyme in this species is believed to be ubiquinone. Couples the redox reaction to proton translocation (for every two electrons transferred, four hydrogen ions are translocated across the cytoplasmic membrane), and thus conserves the redox energy in a proton gradient. The protein is NADH-quinone oxidoreductase subunit D 1 of Solibacter usitatus (strain Ellin6076).